The following is a 946-amino-acid chain: DNA primase (946 aa).

Positions 596-626 are disordered; sequence RDTEEDEDGKENKNNVPDNGVFQKTTSSVDT. Positions 617–626 are enriched in polar residues; that stretch reads FQKTTSSVDT. Residues 881 to 920 form a CHC2-type zinc finger; that stretch reads CLNYTHRNPQETVQVFIDLRTEHSYALWASLWSRCFTKKC.

Belongs to the herpesviridae DNA primase family. Associates with the helicase and the primase-associated factor to form the helicase-primase factor. Interacts with host SNAPIN.

The protein localises to the host nucleus. In terms of biological role, essential component of the helicase/primase complex. Unwinds the DNA at the replication forks and generates single-stranded DNA for both leading and lagging strand synthesis. The primase initiates primer synthesis and thereby produces large amount of short RNA primers on the lagging strand that the polymerase elongates using dNTPs. This is DNA primase (UL70) from Homo sapiens (Human).